Reading from the N-terminus, the 198-residue chain is Virion infectivity factor (198 aa).

The RNA-binding stretch occupies residues 76–115 (GERPWHLGHGIGLEWRQGKYSTQIDPETADQLIHTRYFTC). Threonine 97 bears the Phosphothreonine; by host MAP4K1 mark. An HCCH motif motif is present at residues 109–140 (HTRYFTCFAAGAVRQAILGERILTFCHFQSGH). Phosphothreonine; by host is present on threonine 145. The BC-box-like motif signature appears at 145 to 154 (TLQFLAFRKV). The segment at 152-170 (RKVVESQDKQPKGPRRPLP) is multimerization. The segment at 159 to 198 (DKQPKGPRRPLPSVTKLTEDRWNKHRTTTGRRENHTLSGC) is disordered. Serine 171 is modified (phosphoserine; by host MAP4K1). Positions 177–178 (ED) are membrane association. A compositionally biased stretch (basic and acidic residues) spans 188–198 (GRRENHTLSGC).

This sequence belongs to the primate lentivirus group Vif protein family. As to quaternary structure, homomultimer; in vitro and presumably in vivo. Interacts with viral Pr55Gag precursor, host APOBEC3G, UBCE7IP1 isoform 3/ZIN, ABCE1 and possibly with SAT. Forms an E3 ligase complex by interacting with host CUL5 and elongin BC complex (ELOB and ELOC). Post-translationally, highly phosphorylated on serine and threonine residues. Thr-97 and Ser-171 are phosphorylated by the mitogen activated kinase MAP4K1. Polyubiquitinated and degraded by the proteasome in the presence of APOBEC3G.

The protein localises to the host cytoplasm. It localises to the host cell membrane. The protein resides in the virion. Its function is as follows. Counteracts the innate antiviral activity of APOBEC3G. Forms a complex with host APOBEC3G thus preventing the entry of this lethally hypermutating enzyme into progeny virions. Functions as an adapter molecule, recruiting APOBEC3G to the ubiquitin-proteasome machinery. Targets APOBEC3G for degradation through the assembly with elongin BC complex, CUL5 and RBX1. Binds viral RNA and affects the stability of viral nucleoprotein core. May play a role in viral morphology. Interacts with host ABCE1, which seems to be involved in lentiviruses capsid formation and displays RNase L inhibitor activity. This interaction may play a role in protecting viral RNA from damage during viral assembly. May interact with host SAT, which is a regulator of polyamine cell level. This interaction may be relevant since polyamines affect viral RNA properties. This chain is Virion infectivity factor, found in Pan troglodytes (Chimpanzee).